The chain runs to 323 residues: MSFASETKKELTHMDVSDSDAKVELAAFIRMNGAISFSNQLVIMDVQTENAAIARRMYQLLKDLYEVPIELLVRRKMKLKKNNVYIVRLKSGTRGILEDLRILEPPMTFTKSIDRGFVKKRSAKRAYLRGAFLASGSVNNPETSSYHLEIFSVYEEHNEAICALMNQFDLNARTLERKNGFITYLKEAEKITEFLSIIGATSALLHFEDVRIMRDMRNSVNRLVNCETANLNKTINAAVRQIDNIKYIQSTVGLEALPERLREIAALRIANEDVTLKELGEMLTTGQVSKSGINHRLRKLDQIAERLRSGETPAQVGLKISNS.

The segment at residues 275 to 309 (TLKELGEMLTTGQVSKSGINHRLRKLDQIAERLRS) is a DNA-binding region (H-T-H motif).

Belongs to the WhiA family.

Its function is as follows. Involved in cell division and chromosome segregation. This chain is Probable cell division protein WhiA, found in Listeria monocytogenes serotype 4b (strain CLIP80459).